A 491-amino-acid polypeptide reads, in one-letter code: Probable protein phosphatase 2C 52 (491 aa).

The span at 1-11 shows a compositional bias: basic and acidic residues; sequence MVYDGAVKDQE. The segment at 1–211 is disordered; it reads MVYDGAVKDQ…REREKERERV (211 aa). Positions 12–54 are enriched in low complexity; the sequence is SSANPASASAALSEASAAASEVTAAAAAGAGAGAAEEGAAVSG. Residues 66–78 are compositionally biased toward basic residues; that stretch reads GVRHPLKHRRFRA. The span at 95-105 shows a compositional bias: acidic residues; that stretch reads VADEEASEVEQ. Basic and acidic residues predominate over residues 187–211; that stretch reads VEEKKHKDQENKHKEREREKERERV. The region spanning 229 to 475 is the PPM-type phosphatase domain; that stretch reads SCGYSSFRGK…DNITCIVVKF (247 aa). The Mn(2+) site is built by Asp265, Gly266, Asp427, and Asp466.

This sequence belongs to the PP2C family. Requires Mg(2+) as cofactor. It depends on Mn(2+) as a cofactor.

The catalysed reaction is O-phospho-L-seryl-[protein] + H2O = L-seryl-[protein] + phosphate. The enzyme catalyses O-phospho-L-threonyl-[protein] + H2O = L-threonyl-[protein] + phosphate. The chain is Probable protein phosphatase 2C 52 from Oryza sativa subsp. japonica (Rice).